A 296-amino-acid chain; its full sequence is Acetyl-coenzyme A carboxylase carboxyl transferase subunit beta (296 aa).

Residues 25–294 (LWIKDPSTGE…NSDAPAPPEA (270 aa)) form the CoA carboxyltransferase N-terminal domain.

It belongs to the AccD/PCCB family. In terms of assembly, acetyl-CoA carboxylase is a heterohexamer composed of biotin carboxyl carrier protein (AccB), biotin carboxylase (AccC) and two subunits each of ACCase subunit alpha (AccA) and ACCase subunit beta (AccD).

It localises to the cytoplasm. The catalysed reaction is N(6)-carboxybiotinyl-L-lysyl-[protein] + acetyl-CoA = N(6)-biotinyl-L-lysyl-[protein] + malonyl-CoA. The protein operates within lipid metabolism; malonyl-CoA biosynthesis; malonyl-CoA from acetyl-CoA: step 1/1. Component of the acetyl coenzyme A carboxylase (ACC) complex. Biotin carboxylase (BC) catalyzes the carboxylation of biotin on its carrier protein (BCCP) and then the CO(2) group is transferred by the transcarboxylase to acetyl-CoA to form malonyl-CoA. In Brucella ovis (strain ATCC 25840 / 63/290 / NCTC 10512), this protein is Acetyl-coenzyme A carboxylase carboxyl transferase subunit beta.